Reading from the N-terminus, the 316-residue chain is Arginine transport system permease protein ArgU (316 aa).

Residues 1-14 (MSDLNQGPGASTAQ) show a composition bias toward polar residues. Residues 1-20 (MSDLNQGPGASTAQPKPIEA) are disordered. Helical transmembrane passes span 29 to 49 (WVAAAIIVALLAWFIISALNN), 74 to 94 (IALTLLSMILGVVLGAILAVM), 108 to 128 (LYLWIFRGTPIYVQLVFWGLL), 151 to 171 (MFLLAVIGLGLNEAAYMAEIV), 217 to 237 (LISMLKTTSLVVAIPYSLELY), and 251 to 271 (VPMLLVAASWYLVITSILMVG). One can recognise an ABC transmembrane type-1 domain in the interval 70–274 (ALHTIALTLL…TSILMVGQYY (205 aa)).

This sequence belongs to the binding-protein-dependent transport system permease family. In terms of assembly, the complex is probably composed of two ATP-binding proteins (ArgV), two transmembrane proteins (ArgU) and a solute-binding protein (ArgT).

It localises to the cell membrane. Its function is as follows. Part of the ABC transporter complex ArgTUV involved in L-arginine import. May also transport L-citrulline. Probably responsible for the translocation of the substrate across the membrane. The polypeptide is Arginine transport system permease protein ArgU (Corynebacterium glutamicum (strain ATCC 13032 / DSM 20300 / JCM 1318 / BCRC 11384 / CCUG 27702 / LMG 3730 / NBRC 12168 / NCIMB 10025 / NRRL B-2784 / 534)).